Here is a 414-residue protein sequence, read N- to C-terminus: UPF0754 membrane protein tlr2287 (414 aa).

The next 2 helical transmembrane spans lie at 2–22 (ADIS…IGYF) and 386–406 (AIVR…AGVL).

It belongs to the UPF0754 family.

It localises to the cell inner membrane. The chain is UPF0754 membrane protein tlr2287 from Thermosynechococcus vestitus (strain NIES-2133 / IAM M-273 / BP-1).